We begin with the raw amino-acid sequence, 955 residues long: Centrosomal protein of 112 kDa (955 aa).

A coiled-coil region spans residues 277–954; the sequence is QKHDADVQKI…QEELTTYQGR (678 aa).

It localises to the cytoplasm. The protein resides in the cytoskeleton. Its subcellular location is the microtubule organizing center. The protein localises to the centrosome. The sequence is that of Centrosomal protein of 112 kDa (CEP112) from Homo sapiens (Human).